The sequence spans 157 residues: MGKFALNLNAELTGVKNLAPKDEESFYYAFKVQCSGCREIHDNAIEISRSETHSIPGSKGEANLIWTCKNCRKTCSFVIEGPFSPYNDSQETKKVLVLECRGCELVEFIPQGEWIANGAESNTLFDEIVLEDDWYDYDENASSEVSITNLEWSISKA.

Residues C34, C37, C68, and C71 each coordinate Zn(2+).

The protein belongs to the UPF0587 family.

The chain is UPF0587 protein C2D10.03c from Schizosaccharomyces pombe (strain 972 / ATCC 24843) (Fission yeast).